The sequence spans 1228 residues: Apical endosomal glycoprotein (1228 aa).

The first 21 residues, 1–21 (MCLPSHLLSTWVLFMAAQSLG), serve as a signal peptide directing secretion. The Extracellular segment spans residues 23-1159 (TWLPNHCRSP…GEVAAPVSVP (1137 aa)). The region spanning 28 to 49 (HCRSPIKAVCNFVCDCGDCSDE) is the LDL-receptor class A 1; truncated domain. Positions 65 to 223 (FTCNFEQDSC…DDVEFRDCGL (159 aa)) constitute an MAM 1 domain. A glycan (N-linked (GlcNAc...) asparagine) is linked at Asn204. Residues 229-267 (RCPLGHHHCQNKACVEPHQLCDGEDNCGDRSDEDPLICS) enclose the LDL-receptor class A 2 domain. 3 disulfides stabilise this stretch: Cys230–Cys242, Cys237–Cys255, and Cys249–Cys266. Positions 270 to 426 (MATDFETGLG…DLIMSSHCML (157 aa)) constitute an MAM 2 domain. 2 N-linked (GlcNAc...) asparagine glycosylation sites follow: Asn290 and Asn340. The 36-residue stretch at 457–492 (TCEPGHLSCGDLCVPPEQLCDFQKHCAEGEDEHKCG) folds into the LDL-receptor class A 3 domain. 3 disulfides stabilise this stretch: Cys458/Cys469, Cys465/Cys482, and Cys476/Cys491. 4 consecutive MAM domains span residues 492–649 (GTTD…DCNP), 659–815 (LSCN…PCWA), 817–975 (KSCS…PCPQ), and 977–1144 (GSCD…QCKQ). Residue Asn641 is glycosylated (N-linked (GlcNAc...) asparagine). N-linked (GlcNAc...) asparagine glycosylation occurs at Asn841. The helical transmembrane segment at 1160-1180 (VAVGGALLFFMFLVLMGLGGW) threads the bilayer. Topologically, residues 1181-1228 (HWLQKQHCPGQRSTDAAASGFANILFNADHVTLPESITSNPQSPPDLA) are cytoplasmic.

The protein localises to the membrane. In terms of biological role, probably involved in the sorting and selective transport of receptors and ligands across polarized epithelia. The chain is Apical endosomal glycoprotein from Mus musculus (Mouse).